The primary structure comprises 413 residues: Tyrosine--tRNA ligase (413 aa).

Tyrosine 34 contacts L-tyrosine. A 'HIGH' region motif is present at residues 39 to 48; that stretch reads PTSHSLTVGH. 2 residues coordinate L-tyrosine: tyrosine 164 and glutamine 168. Residues 225-229 carry the 'KMSKS' region motif; the sequence is KFGKS. Residue lysine 228 coordinates ATP. In terms of domain architecture, S4 RNA-binding spans 347-413; it reads ILLVDALVQT…GKKNNALIVF (67 aa).

This sequence belongs to the class-I aminoacyl-tRNA synthetase family. TyrS type 1 subfamily. In terms of assembly, homodimer.

The protein resides in the cytoplasm. The catalysed reaction is tRNA(Tyr) + L-tyrosine + ATP = L-tyrosyl-tRNA(Tyr) + AMP + diphosphate + H(+). Its function is as follows. Catalyzes the attachment of tyrosine to tRNA(Tyr) in a two-step reaction: tyrosine is first activated by ATP to form Tyr-AMP and then transferred to the acceptor end of tRNA(Tyr). This Aster yellows witches'-broom phytoplasma (strain AYWB) protein is Tyrosine--tRNA ligase.